The following is a 522-amino-acid chain: Glutamyl-tRNA(Gln) amidotransferase subunit A (522 aa).

Active-site charge relay system residues include lysine 88 and serine 163. Serine 187 serves as the catalytic Acyl-ester intermediate.

This sequence belongs to the amidase family. GatA subfamily. Heterotrimer of A, B and C subunits.

It carries out the reaction L-glutamyl-tRNA(Gln) + L-glutamine + ATP + H2O = L-glutaminyl-tRNA(Gln) + L-glutamate + ADP + phosphate + H(+). Its function is as follows. Allows the formation of correctly charged Gln-tRNA(Gln) through the transamidation of misacylated Glu-tRNA(Gln) in organisms which lack glutaminyl-tRNA synthetase. The reaction takes place in the presence of glutamine and ATP through an activated gamma-phospho-Glu-tRNA(Gln). The chain is Glutamyl-tRNA(Gln) amidotransferase subunit A from Paenarthrobacter aurescens (strain TC1).